A 638-amino-acid chain; its full sequence is 3D-(3,5/4)-trihydroxycyclohexane-1,2-dione hydrolase (638 aa).

Glu67 contributes to the thiamine diphosphate binding site. Positions 442 to 523 (SLPGDLQRLW…INIMLFDNSG (82 aa)) are thiamine pyrophosphate binding. Mg(2+) is bound by residues Asp494 and Asn521.

The protein belongs to the TPP enzyme family. Mg(2+) serves as cofactor. It depends on thiamine diphosphate as a cofactor.

The catalysed reaction is 3D-3,5/4-trihydroxycyclohexane-1,2-dione + H2O = 5-deoxy-D-glucuronate + H(+). Its pathway is polyol metabolism; myo-inositol degradation into acetyl-CoA; acetyl-CoA from myo-inositol: step 3/7. Involved in the cleavage of the C1-C2 bond of 3D-(3,5/4)-trihydroxycyclohexane-1,2-dione (THcHDO) to yield 5-deoxy-glucuronate (5DG). In Listeria monocytogenes serotype 4b (strain F2365), this protein is 3D-(3,5/4)-trihydroxycyclohexane-1,2-dione hydrolase.